A 166-amino-acid polypeptide reads, in one-letter code: Protein FAM89A (166 aa).

It belongs to the FAM89 family.

This chain is Protein FAM89A (fam89a), found in Xenopus laevis (African clawed frog).